The sequence spans 407 residues: L-cysteine:1D-myo-inositol 2-amino-2-deoxy-alpha-D-glucopyranoside ligase (407 aa).

Residue C43 participates in Zn(2+) binding. L-cysteinyl-5'-AMP contacts are provided by residues 43-46, T58, and 81-83; these read CGIT and NAT. The 'HIGH' region signature appears at 45-55; it reads ITPYDATHLGH. The short motif at 183-188 is the 'ERGGDP' region element; sequence QRGGDP. Position 223 (W223) interacts with L-cysteinyl-5'-AMP. A Zn(2+)-binding site is contributed by C227. 245–247 contributes to the L-cysteinyl-5'-AMP binding site; sequence GSD. H252 serves as a coordination point for Zn(2+). V279 contributes to the L-cysteinyl-5'-AMP binding site. A 'KMSKS' region motif is present at residues 285–289; that stretch reads KMSKS.

This sequence belongs to the class-I aminoacyl-tRNA synthetase family. MshC subfamily. Monomer. The cofactor is Zn(2+).

It catalyses the reaction 1D-myo-inositol 2-amino-2-deoxy-alpha-D-glucopyranoside + L-cysteine + ATP = 1D-myo-inositol 2-(L-cysteinylamino)-2-deoxy-alpha-D-glucopyranoside + AMP + diphosphate + H(+). Functionally, catalyzes the ATP-dependent condensation of GlcN-Ins and L-cysteine to form L-Cys-GlcN-Ins. The polypeptide is L-cysteine:1D-myo-inositol 2-amino-2-deoxy-alpha-D-glucopyranoside ligase (Streptosporangium roseum (strain ATCC 12428 / DSM 43021 / JCM 3005 / KCTC 9067 / NCIMB 10171 / NRRL 2505 / NI 9100)).